The chain runs to 103 residues: MSFKRFLQQIPVRICLLIIYLYQWLISPLLGSCCRFFPSCSHYAEQALKSHGFLMGCWLSIKRIGKCGPWHPGGIDMVPKTALQEVLEPYQEIDGGDSSHFSE.

This sequence belongs to the UPF0161 family.

The protein localises to the cell inner membrane. In terms of biological role, could be involved in insertion of integral membrane proteins into the membrane. The polypeptide is Putative membrane protein insertion efficiency factor (Chlamydia pneumoniae (Chlamydophila pneumoniae)).